The following is a 105-amino-acid chain: NADH-quinone oxidoreductase subunit K (105 aa).

Helical transmembrane passes span 4–24, 28–48, and 66–86; these read LTHY…GVIV, IIVI…SLVA, and LSIF…ALIV.

This sequence belongs to the complex I subunit 4L family. In terms of assembly, NDH-1 is composed of 14 different subunits. Subunits NuoA, H, J, K, L, M, N constitute the membrane sector of the complex.

Its subcellular location is the cell inner membrane. The enzyme catalyses a quinone + NADH + 5 H(+)(in) = a quinol + NAD(+) + 4 H(+)(out). Its function is as follows. NDH-1 shuttles electrons from NADH, via FMN and iron-sulfur (Fe-S) centers, to quinones in the respiratory chain. The immediate electron acceptor for the enzyme in this species is believed to be ubiquinone. Couples the redox reaction to proton translocation (for every two electrons transferred, four hydrogen ions are translocated across the cytoplasmic membrane), and thus conserves the redox energy in a proton gradient. The polypeptide is NADH-quinone oxidoreductase subunit K (Akkermansia muciniphila (strain ATCC BAA-835 / DSM 22959 / JCM 33894 / BCRC 81048 / CCUG 64013 / CIP 107961 / Muc)).